We begin with the raw amino-acid sequence, 222 residues long: Pyridoxine/pyridoxamine 5'-phosphate oxidase (222 aa).

Residues 71–76 (RMVLLK), 86–87 (YT), K93, and Q115 contribute to the FMN site. Position 76 (K76) interacts with substrate. Y133, R137, and S141 together coordinate substrate. FMN contacts are provided by residues 150 to 151 (QS) and W195. 201 to 203 (RLH) serves as a coordination point for substrate. FMN is bound at residue R205.

Belongs to the pyridoxamine 5'-phosphate oxidase family. As to quaternary structure, homodimer. FMN serves as cofactor.

It catalyses the reaction pyridoxamine 5'-phosphate + O2 + H2O = pyridoxal 5'-phosphate + H2O2 + NH4(+). The catalysed reaction is pyridoxine 5'-phosphate + O2 = pyridoxal 5'-phosphate + H2O2. It participates in cofactor metabolism; pyridoxal 5'-phosphate salvage; pyridoxal 5'-phosphate from pyridoxamine 5'-phosphate: step 1/1. The protein operates within cofactor metabolism; pyridoxal 5'-phosphate salvage; pyridoxal 5'-phosphate from pyridoxine 5'-phosphate: step 1/1. Its function is as follows. Catalyzes the oxidation of either pyridoxine 5'-phosphate (PNP) or pyridoxamine 5'-phosphate (PMP) into pyridoxal 5'-phosphate (PLP). The chain is Pyridoxine/pyridoxamine 5'-phosphate oxidase from Caulobacter vibrioides (strain ATCC 19089 / CIP 103742 / CB 15) (Caulobacter crescentus).